The primary structure comprises 248 residues: tRNA N(3)-methylcytidine methyltransferase trm141 (248 aa).

S-adenosyl-L-methionine is bound by residues W23, Y27, G63, D86, D112, and I133.

Belongs to the methyltransferase superfamily. METL family.

It localises to the cytoplasm. It is found in the nucleus. It carries out the reaction cytidine(32) in tRNA(Ser) + S-adenosyl-L-methionine = N(3)-methylcytidine(32) in tRNA(Ser) + S-adenosyl-L-homocysteine + H(+). Functionally, S-adenosyl-L-methionine-dependent methyltransferase that mediates N(3)-methylcytidine modification of residue 32 of the tRNA anticodon loop of tRNA(Ser). N(3)-methylcytidine methylation by trm141 requires the formation of N(6)-dimethylallyladenosine(37) (i6A37) by tit1 as prerequisite. Does not catalyze N(3)-methylcytidine modification of tRNA(Thr). In Schizosaccharomyces pombe (strain 972 / ATCC 24843) (Fission yeast), this protein is tRNA N(3)-methylcytidine methyltransferase trm141.